Reading from the N-terminus, the 276-residue chain is Large ribosomal subunit protein uL2 (276 aa).

2 disordered regions span residues 1 to 60 (MSIK…RHKR) and 226 to 276 (NAVD…KRNQ). Basic and acidic residues predominate over residues 20–31 (SKEEITREEPEK). 2 stretches are compositionally biased toward basic residues: residues 50–60 (STRRQGGRHKR) and 258–276 (KTRR…KRNQ).

It belongs to the universal ribosomal protein uL2 family. As to quaternary structure, part of the 50S ribosomal subunit. Forms a bridge to the 30S subunit in the 70S ribosome.

Its function is as follows. One of the primary rRNA binding proteins. Required for association of the 30S and 50S subunits to form the 70S ribosome, for tRNA binding and peptide bond formation. It has been suggested to have peptidyltransferase activity; this is somewhat controversial. Makes several contacts with the 16S rRNA in the 70S ribosome. The sequence is that of Large ribosomal subunit protein uL2 from Natranaerobius thermophilus (strain ATCC BAA-1301 / DSM 18059 / JW/NM-WN-LF).